A 511-amino-acid chain; its full sequence is Lysine--tRNA ligase (511 aa).

2 residues coordinate Mg(2+): E403 and E410.

Belongs to the class-II aminoacyl-tRNA synthetase family. In terms of assembly, homodimer. The cofactor is Mg(2+).

Its subcellular location is the cytoplasm. The catalysed reaction is tRNA(Lys) + L-lysine + ATP = L-lysyl-tRNA(Lys) + AMP + diphosphate. This chain is Lysine--tRNA ligase, found in Onion yellows phytoplasma (strain OY-M).